Consider the following 262-residue polypeptide: 5'-nucleotidase SurE (262 aa).

Positions 8, 9, 39, and 91 each coordinate a divalent metal cation.

The protein belongs to the SurE nucleotidase family. Requires a divalent metal cation as cofactor.

Its subcellular location is the cytoplasm. The catalysed reaction is a ribonucleoside 5'-phosphate + H2O = a ribonucleoside + phosphate. In terms of biological role, nucleotidase that shows phosphatase activity on nucleoside 5'-monophosphates. This chain is 5'-nucleotidase SurE, found in Geobacter sulfurreducens (strain ATCC 51573 / DSM 12127 / PCA).